Here is a 119-residue protein sequence, read N- to C-terminus: Non-specific lipid-transfer protein 3 (119 aa).

The signal sequence occupies residues 1–24 (MARSMKLACVVLAMCMLVAPMAEA). 4 disulfide bridges follow: C28–C77, C38–C54, C55–C100, and C75–C114.

Belongs to the plant LTP family. As to expression, expressed in roots, stem, leaves and tendrils of the mature plant.

Its function is as follows. Plant non-specific lipid-transfer proteins transfer phospholipids as well as galactolipids across membranes. May play a role in wax or cutin deposition in the cell walls of expanding epidermal cells and certain secretory tissues. This chain is Non-specific lipid-transfer protein 3, found in Pisum sativum (Garden pea).